The chain runs to 338 residues: MO25-like protein 2 (338 aa).

This sequence belongs to the Mo25 family.

The protein localises to the cytoplasm. It localises to the cytoskeleton. The protein resides in the spindle pole. Regulates asymmetric cell division in Q.p neuroblast lineage. Plays a role in cell shedding during embryogenesis. The chain is MO25-like protein 2 (mop-25.2) from Caenorhabditis elegans.